We begin with the raw amino-acid sequence, 192 residues long: Ion-translocating oxidoreductase complex subunit B (192 aa).

The segment at 1 to 26 (MNAIWIAVAAVSLLGLAFGAILGYAS) is hydrophobic. The region spanning 32 to 91 (EDDPVVEKIDEILPQSQCGQCGYPGCRPYAEAISCNGEKINRCAPGGEAVMLKIAELLNV) is the 4Fe-4S domain. 12 residues coordinate [4Fe-4S] cluster: Cys49, Cys52, Cys57, Cys74, Cys117, Cys120, Cys123, Cys127, Cys147, Cys150, Cys153, and Cys157. 4Fe-4S ferredoxin-type domains lie at 108–137 (MVAV…GATR) and 138–167 (AMHT…LQPV).

The protein belongs to the 4Fe4S bacterial-type ferredoxin family. RnfB subfamily. In terms of assembly, the complex is composed of six subunits: RsxA, RsxB, RsxC, RsxD, RsxE and RsxG. Requires [4Fe-4S] cluster as cofactor.

The protein localises to the cell inner membrane. In terms of biological role, part of a membrane-bound complex that couples electron transfer with translocation of ions across the membrane. Required to maintain the reduced state of SoxR. In Escherichia coli O127:H6 (strain E2348/69 / EPEC), this protein is Ion-translocating oxidoreductase complex subunit B.